A 53-amino-acid polypeptide reads, in one-letter code: MNQGKIWTVVNPSVGLPLLLGSVTVIAILVHAAVLSHTTWFPAYWQGGLKKAA.

The Cytoplasmic portion of the chain corresponds to 1 to 14; that stretch reads MNQGKIWTVVNPSV. The helical transmembrane segment at 15–35 threads the bilayer; it reads GLPLLLGSVTVIAILVHAAVL. Position 31 (H31) interacts with a bacteriochlorophyll. Over 36-53 the chain is Periplasmic; sequence SHTTWFPAYWQGGLKKAA.

Belongs to the antenna complex alpha subunit family. In terms of assembly, the core complex is formed by different alpha and beta chains, binding bacteriochlorophyll molecules, and arranged most probably in tetrameric structures disposed around the reaction center. The non-pigmented gamma chains may constitute additional components.

The protein resides in the cell inner membrane. Functionally, antenna complexes are light-harvesting systems, which transfer the excitation energy to the reaction centers. This chain is Light-harvesting protein B-800/850 alpha chain, found in Rhodoblastus acidophilus (Rhodopseudomonas acidophila).